We begin with the raw amino-acid sequence, 461 residues long: MVKRIEADNLFELTAELVSASSKLHKFLDQKNLPQPSFDAPAPSVALNSANKPYYDARSAIVEAAEQLIRLVRGPRDTLLALSFEHCATASMQVVFKYKFANHIPLHGSTTYSKIAEAVGDGVTTALVERTIQHCASFGLFETIPGAMLLQCYLVLLVTDPDLEAWMYLSAVIAYPAGAAIPKAVEQYGVSHEADESGYGASIGRKIAQFQRFREPDGKKDHEMFARAMRGIAAGGAYDFRHAVDGGYPWHLLAEGAGHLVVDVGGGPGHVAMALAEKYPSLRFQVQDLPETVQVGAKNCPEHLKSRVSFQSHDFFTSQPAHEVQDGEGIVYFARFILHDWSDKYATKIVQQLATGLRPQDRIILNEVVVPEAGQVGRETERRMHDRDLLMLMNLNGRERTQSAFEAIFASVTPKLRLQRVIHPEQGELSLIEVTLDGVELPAQANGVNGHANGTNGVNGH.

Asp288 provides a ligand contact to S-adenosyl-L-methionine. The active-site Proton acceptor is the His339.

Belongs to the class I-like SAM-binding methyltransferase superfamily. Cation-independent O-methyltransferase family. COMT subfamily.

The protein operates within mycotoxin biosynthesis. Functionally, O-methyltransferase; part of the gene cluster that mediates the biosynthesis of cercosporin, a light-activated, non-host-selective toxin. The perylenequinone chromophore of cercosporin absorbs light energy to attain an electronically-activated triplet state and produces active oxygen species such as the hydroxyl radical, superoxide, hydrogen peroxide or singlet oxygen upon reaction with oxygen molecules. These reactive oxygen species cause damage to various cellular components including lipids, proteins and nucleic acids. The first step of cercosporin biosynthesis is performed by the polyketide synthase CTB1 which catalyzes the formation of nor-toralactone. The starter unit acyltransferase (SAT) domain of CTB1 initiates polyketide extension by the selective utilization of acetyl-CoA, which is elongated to the heptaketide in the beta-ketoacyl synthase (KS) domain by successive condensations with six malonyl units introduced by the malonyl acyltransferase (MAT) domain. The product template (PT) domain catalyzes C4-C9 and C2-C11 aldol cyclizations and dehydrations to a trihydroxynaphthalene, which is thought to be delivered to the thioesterase (TE) domain for product release. The bifunctional enzyme CTB3 then methylates nor-toralactone to toralactone before conducting an unusual oxidative aromatic ring opening. The O-methyltransferase CTB2 further methylates the nascent OH-6 of the CBT3 product, blocking further oxidation at this site before the reductase CTB6 reduces the 2-oxopropyl ketone at position C7, giving naphthalene. The FAD-dependent monooxygenase CTB5 in concert with the multicopper oxidase CTB12 are responsible for homodimerization of naphthalene with CTB7 installing the dioxepine moiety, finally producing cercosporin. The fasciclin domain-containing protein CTB11 might act with CTB5 and CTB12 whereas the roles of CTB9 and CTB10 have still to be elucidated. The protein is O-methyltransferase CTB2 of Cercospora nicotianae (Barn spot disease fungus).